The following is a 410-amino-acid chain: Sorting nexin-4 (410 aa).

A PX domain is found at 11-135; that stretch reads FIIVSDPQKQ…TFLVSSDWDA (125 aa). A 1,2-diacyl-sn-glycero-3-phospho-(1D-myo-inositol-3-phosphate)-binding residues include Arg-58, Ser-60, Lys-84, and Arg-101. The stretch at 329–368 forms a coiled coil; that stretch reads NQEAARREKISKLESKVQALTTEVENAKKVADAFEKEALK.

The protein belongs to the sorting nexin family.

Its subcellular location is the cytoplasm. The protein localises to the cytosol. It localises to the preautophagosomal structure membrane. The protein resides in the endosome membrane. Functionally, sorting nexin, involved in the separation or division of vacuoles throughout the entire life cycle of the cells. Involved in retrieval of late-Golgi SNAREs from post-Golgi endosomes to the trans-Golgi network, for cytoplasm to vacuole transport (Cvt), and autophagy of large cargos including mitophagy, pexophagy and glycophagy. The sequence is that of Sorting nexin-4 (SNX4) from Eremothecium gossypii (strain ATCC 10895 / CBS 109.51 / FGSC 9923 / NRRL Y-1056) (Yeast).